The chain runs to 382 residues: MGILGLSKLIADICPQAIKESDIKNYFGRKVAIDASMCLYQFLIAVRAEGAQLTNVDGETTSHLMGMFYRTIRLLENGIKPVYVFDGKPPISKSGELAKRAERREDAQKALEKATEAGNEADMDKFNRRLVKVTKEHANEAKELLKLMGVPYVEAPCEAEAQCAALVKAGKVYATATEDMDALTFGSGILLRHLTFSEARKMPVKEFSYAKVLDGFGLTSQEFIDLCILLGCDYCDGIRGIGPKRATELMNSYKDIETILEKIDRKKYTVPEDWNYQIARELFVNPEVADPSSLELKWFDPDEDGLVRFFCGDRQFNEDRVRSGAKKILKCKSSQTQGRLDSFFKVIPAACGTTPKRKADDKNNVQQKKSKTAGNTKGKRPK.

The interval 1 to 104 (MGILGLSKLI…GELAKRAERR (104 aa)) is N-domain. Asp34 is a binding site for Mg(2+). 2 residues coordinate DNA: Arg47 and Arg70. Residue Asp86 participates in Mg(2+) binding. The interval 95-118 (GELAKRAERREDAQKALEKATEAG) is disordered. Over residues 96–115 (ELAKRAERREDAQKALEKAT) the composition is skewed to basic and acidic residues. Positions 122 to 253 (DMDKFNRRLV…KRATELMNSY (132 aa)) are I-domain. 4 residues coordinate Mg(2+): Glu158, Glu160, Asp179, and Asp181. Glu158 is a DNA binding site. Residues Gly231 and Asp233 each coordinate DNA. Asp233 lines the Mg(2+) pocket. The interval 336–344 (TQGRLDSFF) is interaction with PCNA. Residues 353–382 (TTPKRKADDKNNVQQKKSKTAGNTKGKRPK) are disordered. Residues 364-375 (NVQQKKSKTAGN) show a composition bias toward polar residues.

Belongs to the XPG/RAD2 endonuclease family. FEN1 subfamily. In terms of assembly, interacts with PCNA. Three molecules of FEN1 bind to one PCNA trimer with each molecule binding to one PCNA monomer. PCNA stimulates the nuclease activity without altering cleavage specificity. Mg(2+) serves as cofactor. Phosphorylated. Phosphorylation upon DNA damage induces relocalization to the nuclear plasma.

It is found in the nucleus. It localises to the nucleolus. The protein localises to the nucleoplasm. Its subcellular location is the mitochondrion. Its function is as follows. Structure-specific nuclease with 5'-flap endonuclease and 5'-3' exonuclease activities involved in DNA replication and repair. During DNA replication, cleaves the 5'-overhanging flap structure that is generated by displacement synthesis when DNA polymerase encounters the 5'-end of a downstream Okazaki fragment. It enters the flap from the 5'-end and then tracks to cleave the flap base, leaving a nick for ligation. Also involved in the long patch base excision repair (LP-BER) pathway, by cleaving within the apurinic/apyrimidinic (AP) site-terminated flap. Acts as a genome stabilization factor that prevents flaps from equilibrating into structures that lead to duplications and deletions. Also possesses 5'-3' exonuclease activity on nicked or gapped double-stranded DNA, and exhibits RNase H activity. Also involved in replication and repair of rDNA and in repairing mitochondrial DNA. The protein is Flap endonuclease 1 of Glossina morsitans morsitans (Savannah tsetse fly).